The chain runs to 414 residues: Probable peptidoglycan glycosyltransferase FtsW (414 aa).

At 1 to 12 (MRLSLPRLKMPR) the chain is on the cytoplasmic side. Residues 13–33 (LPGFSILVWISTALKGWVMGS) traverse the membrane as a helical segment. Topologically, residues 34-47 (REKDTDSLIMYDRT) are periplasmic. The helical transmembrane segment at 48-68 (LLWLTFGLAAIGFIMVTSASM) threads the bilayer. Over 69 to 86 (PIGQRLTNDPFFFAKRDG) the chain is Cytoplasmic. A helical transmembrane segment spans residues 87-107 (VYLILAFILAIITLRLPMEFW). The Periplasmic segment spans residues 108–111 (QRYS). The chain crosses the membrane as a helical span at residues 112-132 (ATMLLGSIILLMIVLVVGSSV). The Cytoplasmic portion of the chain corresponds to 133 to 174 (KGASRWIDLGLLRIQPAELTKLSLFCYIANYLVRKGDEVRNN). A helical membrane pass occupies residues 175 to 194 (LRGFLKPMGVILVLAVLLLA). The Periplasmic segment spans residues 195-197 (QPD). Residues 198-217 (LGTVVVLFVTTLAMLFLAGA) traverse the membrane as a helical segment. A topological domain (cytoplasmic) is located at residue lysine 218. A helical membrane pass occupies residues 219–239 (LWQFIAIIGMGISAVVLLILA). Residues 240–301 (EPYRIRRVTA…PEAHTDFIFA (62 aa)) lie on the Periplasmic side of the membrane. Residues 302–322 (IIGEELGYVGVVLALLMVFFV) form a helical membrane-spanning segment. Residues 323–342 (AFRAMSIGRKALEIDHRFSG) are Cytoplasmic-facing. The helical transmembrane segment at 343–363 (FLACSIGIWFSFQALVNVGAA) threads the bilayer. Residues 364–373 (AGMLPTKGLT) are Periplasmic-facing. A helical transmembrane segment spans residues 374-394 (LPLISYGGSSLLIMSTAIMML). The Cytoplasmic segment spans residues 395–414 (LRIDYETRLEKAQAFVRGSR).

This sequence belongs to the SEDS family. FtsW subfamily.

The protein localises to the cell inner membrane. The enzyme catalyses [GlcNAc-(1-&gt;4)-Mur2Ac(oyl-L-Ala-gamma-D-Glu-L-Lys-D-Ala-D-Ala)](n)-di-trans,octa-cis-undecaprenyl diphosphate + beta-D-GlcNAc-(1-&gt;4)-Mur2Ac(oyl-L-Ala-gamma-D-Glu-L-Lys-D-Ala-D-Ala)-di-trans,octa-cis-undecaprenyl diphosphate = [GlcNAc-(1-&gt;4)-Mur2Ac(oyl-L-Ala-gamma-D-Glu-L-Lys-D-Ala-D-Ala)](n+1)-di-trans,octa-cis-undecaprenyl diphosphate + di-trans,octa-cis-undecaprenyl diphosphate + H(+). The protein operates within cell wall biogenesis; peptidoglycan biosynthesis. Peptidoglycan polymerase that is essential for cell division. This chain is Probable peptidoglycan glycosyltransferase FtsW, found in Escherichia coli O157:H7.